Reading from the N-terminus, the 71-residue chain is Protein SlyX homolog (71 aa).

It belongs to the SlyX family.

The polypeptide is Protein SlyX homolog (Rhodospirillum rubrum (strain ATCC 11170 / ATH 1.1.1 / DSM 467 / LMG 4362 / NCIMB 8255 / S1)).